Reading from the N-terminus, the 273-residue chain is Undecaprenyl-diphosphatase (273 aa).

Helical transmembrane passes span 7 to 27 (LWIA…PVSS), 45 to 65 (AETF…VMFW), 89 to 109 (LTLI…LLLH), 115 to 135 (LFNP…LIAA), 152 to 171 (TYRQ…WPGF), 189 to 209 (YAAS…ATGL), 221 to 241 (ADFP…LIAI), and 253 to 273 (FIPF…LFVL).

The protein belongs to the UppP family.

It localises to the cell inner membrane. It carries out the reaction di-trans,octa-cis-undecaprenyl diphosphate + H2O = di-trans,octa-cis-undecaprenyl phosphate + phosphate + H(+). In terms of biological role, catalyzes the dephosphorylation of undecaprenyl diphosphate (UPP). Confers resistance to bacitracin. This is Undecaprenyl-diphosphatase from Erwinia tasmaniensis (strain DSM 17950 / CFBP 7177 / CIP 109463 / NCPPB 4357 / Et1/99).